The chain runs to 271 residues: Ribosomal RNA small subunit methyltransferase A (271 aa).

6 residues coordinate S-adenosyl-L-methionine: His14, Leu16, Gly41, Glu63, Asp89, and Asn107.

This sequence belongs to the class I-like SAM-binding methyltransferase superfamily. rRNA adenine N(6)-methyltransferase family. RsmA subfamily.

The protein resides in the cytoplasm. It carries out the reaction adenosine(1518)/adenosine(1519) in 16S rRNA + 4 S-adenosyl-L-methionine = N(6)-dimethyladenosine(1518)/N(6)-dimethyladenosine(1519) in 16S rRNA + 4 S-adenosyl-L-homocysteine + 4 H(+). Its function is as follows. Specifically dimethylates two adjacent adenosines (A1518 and A1519) in the loop of a conserved hairpin near the 3'-end of 16S rRNA in the 30S particle. May play a critical role in biogenesis of 30S subunits. This is Ribosomal RNA small subunit methyltransferase A from Lawsonia intracellularis (strain PHE/MN1-00).